The sequence spans 540 residues: Alanine aminotransferase 2, mitochondrial (540 aa).

A mitochondrion-targeting transit peptide spans 1 to 46; sequence MRRFLINQAKGLVDHSRRQHHHKSPSFLSPQPRPLASSPPALSRFF. The segment at 11 to 40 is disordered; that stretch reads GLVDHSRRQHHHKSPSFLSPQPRPLASSPP. A compositionally biased stretch (low complexity) spans 28–40; the sequence is LSPQPRPLASSPP. An N6-(pyridoxal phosphate)lysine modification is found at lysine 357.

It belongs to the class-I pyridoxal-phosphate-dependent aminotransferase family. Alanine aminotransferase subfamily. In terms of assembly, homodimer. Pyridoxal 5'-phosphate serves as cofactor. Post-translationally, the N-terminus is blocked. Expressed in shoots, essentially in leaves and flowers, mostly in vascular tissues. Also detected in stems and roots.

The protein resides in the mitochondrion. It carries out the reaction L-alanine + 2-oxoglutarate = pyruvate + L-glutamate. It participates in photosynthesis; C4 acid pathway. It functions in the pathway amino-acid degradation; L-alanine degradation via transaminase pathway; pyruvate from L-alanine: step 1/1. This is Alanine aminotransferase 2, mitochondrial (ALAAT2) from Arabidopsis thaliana (Mouse-ear cress).